A 61-amino-acid chain; its full sequence is Metallothionein-2B (61 aa).

Met-1 carries the post-translational modification N-acetylmethionine. The segment at 1-29 (MDPNCSCAAGGSCTCAGSCKCKDCRCTSC) is beta. 20 residues coordinate a divalent metal cation: Cys-5, Cys-7, Cys-13, Cys-15, Cys-19, Cys-21, Cys-24, Cys-26, Cys-29, Cys-33, Cys-34, Cys-36, Cys-37, Cys-41, Cys-44, Cys-48, Cys-50, Cys-57, Cys-59, and Cys-60. An alpha region spans residues 30–61 (KKSCCSCCPAGCARCAQGCICKGASDKCSCCA).

This sequence belongs to the metallothionein superfamily. Type 1 family. As to quaternary structure, monomer.

Metallothioneins have a high content of cysteine residues that bind various heavy metals; these proteins are transcriptionally regulated by both heavy metals and glucocorticoids. The sequence is that of Metallothionein-2B (MT2B) from Sus scrofa (Pig).